A 290-amino-acid chain; its full sequence is Lectin-related protein (290 aa).

The N-terminal stretch at 1–36 is a signal peptide; the sequence is ANSNSRPHLLQTQKPFSVVLAISITFYLLLLNKVNS. Asn-119, Asn-147, and Asn-152 each carry an N-linked (GlcNAc...) asparagine glycan. Glu-161 and Asp-163 together coordinate Mn(2+). Ca(2+) is bound by residues Asp-163, Asn-167, and Asp-170. 2 residues coordinate Mn(2+): Asp-170 and His-175.

This sequence belongs to the leguminous lectin family. Homotetramer.

Functionally, does not have any carbohydrate binding or agglutination activity. This chain is Lectin-related protein, found in Cladrastis kentukea (Yellow wood).